The following is a 165-amino-acid chain: Cyclic pyranopterin monophosphate synthase (165 aa).

Residues 79–81 and 117–118 contribute to the substrate site; these read LCH and ME. Asp132 is an active-site residue.

This sequence belongs to the MoaC family. In terms of assembly, homohexamer; trimer of dimers.

It carries out the reaction (8S)-3',8-cyclo-7,8-dihydroguanosine 5'-triphosphate = cyclic pyranopterin phosphate + diphosphate. The protein operates within cofactor biosynthesis; molybdopterin biosynthesis. In terms of biological role, catalyzes the conversion of (8S)-3',8-cyclo-7,8-dihydroguanosine 5'-triphosphate to cyclic pyranopterin monophosphate (cPMP). This chain is Cyclic pyranopterin monophosphate synthase, found in Chloroflexus aggregans (strain MD-66 / DSM 9485).